The chain runs to 130 residues: MSMQDPIADMLTRIRNGQAASKVAVSMPSSKLKVAIAKVLKEEGYIAGYSVAGDVKPELEIELKYFQGKPVVELIQRVSRPGLRIYKRTTDLPKVMGGLGVAIVSTSKGVMTDRAARKASMGGEIICYVA.

Belongs to the universal ribosomal protein uS8 family. Part of the 30S ribosomal subunit. Contacts proteins S5 and S12.

One of the primary rRNA binding proteins, it binds directly to 16S rRNA central domain where it helps coordinate assembly of the platform of the 30S subunit. In Aeromonas salmonicida (strain A449), this protein is Small ribosomal subunit protein uS8.